Consider the following 360-residue polypeptide: Photosystem II protein D1 (360 aa).

The next 3 membrane-spanning stretches (helical) occupy residues 29 to 46 (YIGW…TATS), 118 to 133 (HFLT…EWEL), and 142 to 156 (WISV…AAAA). H118 is a binding site for chlorophyll a. Y126 provides a ligand contact to pheophytin a. Residues D170 and E189 each contribute to the [CaMn4O5] cluster site. Residues 197–218 (FHQLGVAGVFGGSLFSAMHGSL) form a helical membrane-spanning segment. H198 provides a ligand contact to chlorophyll a. Residues H215 and 264–265 (SF) contribute to the a quinone site. H215 provides a ligand contact to Fe cation. A Fe cation-binding site is contributed by H272. Residues 274–288 (FLGLWPVVGIWLTAL) traverse the membrane as a helical segment. The [CaMn4O5] cluster site is built by H332, E333, D342, and A344. Residues 345 to 360 (SGESLPVALTAPAVNG) constitute a propeptide that is removed on maturation.

Belongs to the reaction center PufL/M/PsbA/D family. In terms of assembly, PSII is composed of 1 copy each of membrane proteins PsbA, PsbB, PsbC, PsbD, PsbE, PsbF, PsbH, PsbI, PsbJ, PsbK, PsbL, PsbM, PsbT, PsbX, PsbY, PsbZ, Psb30/Ycf12, at least 3 peripheral proteins of the oxygen-evolving complex and a large number of cofactors. It forms dimeric complexes. The D1/D2 heterodimer binds P680, chlorophylls that are the primary electron donor of PSII, and subsequent electron acceptors. It shares a non-heme iron and each subunit binds pheophytin, quinone, additional chlorophylls, carotenoids and lipids. D1 provides most of the ligands for the Mn4-Ca-O5 cluster of the oxygen-evolving complex (OEC). There is also a Cl(-1) ion associated with D1 and D2, which is required for oxygen evolution. The PSII complex binds additional chlorophylls, carotenoids and specific lipids. is required as a cofactor. Post-translationally, tyr-161 forms a radical intermediate that is referred to as redox-active TyrZ, YZ or Y-Z. In terms of processing, C-terminally processed by CTPA; processing is essential to allow assembly of the oxygen-evolving complex and thus photosynthetic growth.

The protein resides in the plastid. Its subcellular location is the chloroplast thylakoid membrane. The enzyme catalyses 2 a plastoquinone + 4 hnu + 2 H2O = 2 a plastoquinol + O2. Functionally, photosystem II (PSII) is a light-driven water:plastoquinone oxidoreductase that uses light energy to abstract electrons from H(2)O, generating O(2) and a proton gradient subsequently used for ATP formation. It consists of a core antenna complex that captures photons, and an electron transfer chain that converts photonic excitation into a charge separation. The D1/D2 (PsbA/PsbD) reaction center heterodimer binds P680, the primary electron donor of PSII as well as several subsequent electron acceptors. The sequence is that of Photosystem II protein D1 from Pyropia yezoensis (Susabi-nori).